Consider the following 163-residue polypeptide: Nucleotide-binding protein Mflv_5248 (163 aa).

The protein belongs to the YajQ family.

Its function is as follows. Nucleotide-binding protein. This chain is Nucleotide-binding protein Mflv_5248, found in Mycolicibacterium gilvum (strain PYR-GCK) (Mycobacterium gilvum (strain PYR-GCK)).